Here is a 117-residue protein sequence, read N- to C-terminus: Peptidyl-tRNA hydrolase (117 aa).

The protein belongs to the PTH2 family.

It is found in the cytoplasm. The enzyme catalyses an N-acyl-L-alpha-aminoacyl-tRNA + H2O = an N-acyl-L-amino acid + a tRNA + H(+). Its function is as follows. The natural substrate for this enzyme may be peptidyl-tRNAs which drop off the ribosome during protein synthesis. The sequence is that of Peptidyl-tRNA hydrolase from Thermoplasma volcanium (strain ATCC 51530 / DSM 4299 / JCM 9571 / NBRC 15438 / GSS1).